The sequence spans 428 residues: Glutamyl-tRNA reductase (428 aa).

Substrate contacts are provided by residues 49 to 52 (TCNR), serine 109, 114 to 116 (EGQ), and glutamine 120. Catalysis depends on cysteine 50, which acts as the Nucleophile. 189-194 (GAGKMS) serves as a coordination point for NADP(+).

Belongs to the glutamyl-tRNA reductase family. Homodimer.

It catalyses the reaction (S)-4-amino-5-oxopentanoate + tRNA(Glu) + NADP(+) = L-glutamyl-tRNA(Glu) + NADPH + H(+). The protein operates within porphyrin-containing compound metabolism; protoporphyrin-IX biosynthesis; 5-aminolevulinate from L-glutamyl-tRNA(Glu): step 1/2. It participates in porphyrin-containing compound metabolism; chlorophyll biosynthesis. In terms of biological role, catalyzes the NADPH-dependent reduction of glutamyl-tRNA(Glu) to glutamate 1-semialdehyde (GSA). The polypeptide is Glutamyl-tRNA reductase (Trichormus variabilis (strain ATCC 29413 / PCC 7937) (Anabaena variabilis)).